The sequence spans 309 residues: Homoserine O-succinyltransferase (309 aa).

Cys142 serves as the catalytic Acyl-thioester intermediate. Substrate-binding residues include Lys163 and Ser192. The active-site Proton acceptor is His235. The active site involves Glu237. Substrate is bound at residue Arg249.

It belongs to the MetA family.

It is found in the cytoplasm. It carries out the reaction L-homoserine + succinyl-CoA = O-succinyl-L-homoserine + CoA. It participates in amino-acid biosynthesis; L-methionine biosynthesis via de novo pathway; O-succinyl-L-homoserine from L-homoserine: step 1/1. Functionally, transfers a succinyl group from succinyl-CoA to L-homoserine, forming succinyl-L-homoserine. The sequence is that of Homoserine O-succinyltransferase from Klebsiella pneumoniae (strain 342).